The primary structure comprises 270 residues: tRNA (guanine-N(1)-)-methyltransferase (270 aa).

Residues glycine 119 and 139–144 (IGDYVI) contribute to the S-adenosyl-L-methionine site.

Belongs to the RNA methyltransferase TrmD family. As to quaternary structure, homodimer.

It is found in the cytoplasm. The enzyme catalyses guanosine(37) in tRNA + S-adenosyl-L-methionine = N(1)-methylguanosine(37) in tRNA + S-adenosyl-L-homocysteine + H(+). In terms of biological role, specifically methylates guanosine-37 in various tRNAs. The sequence is that of tRNA (guanine-N(1)-)-methyltransferase from Nitrosomonas europaea (strain ATCC 19718 / CIP 103999 / KCTC 2705 / NBRC 14298).